We begin with the raw amino-acid sequence, 141 residues long: Vesicle-associated membrane protein 4 (141 aa).

The disordered stretch occupies residues 1–51 (MPPKFKRHLNDDDVTGSVKSERRNLLEDDSDEEEDFFLRGPSGPRFGPRND). Topologically, residues 1–115 (MPPKFKRHLN…RRQMWWRGCK (115 aa)) are cytoplasmic. A phosphoserine mark is found at Ser-17 and Ser-30. Residues 52–112 (KIKHVQNQVD…KQLRRQMWWR (61 aa)) enclose the v-SNARE coiled-coil homology domain. The chain crosses the membrane as a helical; Anchor for type IV membrane protein span at residues 116–136 (IKAIMALVAVILLLVIIILIV). Residues 137-141 (VKYRT) are Vesicular-facing.

The protein belongs to the synaptobrevin family. Identified in a complex containing STX6, STX12, VAMP4 and VTI1A. Interacts with BAIAP3; this interaction is increased in the presence of calcium.

It localises to the golgi apparatus. It is found in the trans-Golgi network membrane. In terms of biological role, involved in the pathway that functions to remove an inhibitor (probably synaptotagmin-4) of calcium-triggered exocytosis during the maturation of secretory granules. May be a marker for this sorting pathway that is critical for remodeling the secretory response of granule. This chain is Vesicle-associated membrane protein 4 (VAMP4), found in Bos taurus (Bovine).